Here is a 332-residue protein sequence, read N- to C-terminus: D-lactate dehydrogenase (332 aa).

Residues 155–156 (RI), D175, 206–207 (VP), N212, and 233–235 (FAR) each bind NAD(+). Residues R235 and E264 contribute to the active site. H296 (proton donor) is an active-site residue.

The protein belongs to the D-isomer specific 2-hydroxyacid dehydrogenase family. Homodimer.

The catalysed reaction is (R)-lactate + NAD(+) = pyruvate + NADH + H(+). This is D-lactate dehydrogenase from Lactiplantibacillus pentosus (Lactobacillus pentosus).